A 363-amino-acid polypeptide reads, in one-letter code: Spermatogenesis-associated protein 22 (363 aa).

2 stretches are compositionally biased toward polar residues: residues 1 to 12 and 145 to 157; these read MKRSLNENSARS and SCPMSSGAQQQKQ. Disordered stretches follow at residues 1-51 and 145-169; these read MKRS…DNYD and SCPMSSGAQQQKQFGIPEPPNLPRN.

In terms of assembly, component of a multiprotein complex with MEIOB and RPA2. Interacts with MEIOB. Interacts with the complex BRME1:HSF2BP:BRCA2. As to expression, expressed in testis.

The protein resides in the chromosome. Its function is as follows. Meiosis-specific protein required for homologous recombination in meiosis I. In Macaca fascicularis (Crab-eating macaque), this protein is Spermatogenesis-associated protein 22 (SPATA22).